The chain runs to 157 residues: SsrA-binding protein (157 aa).

Residues 133–157 form a disordered region; it reads LHDKRESEKKRDWGREKGRLLRARG. Residues 135 to 151 are compositionally biased toward basic and acidic residues; the sequence is DKRESEKKRDWGREKGR.

It belongs to the SmpB family.

The protein resides in the cytoplasm. Its function is as follows. Required for rescue of stalled ribosomes mediated by trans-translation. Binds to transfer-messenger RNA (tmRNA), required for stable association of tmRNA with ribosomes. tmRNA and SmpB together mimic tRNA shape, replacing the anticodon stem-loop with SmpB. tmRNA is encoded by the ssrA gene; the 2 termini fold to resemble tRNA(Ala) and it encodes a 'tag peptide', a short internal open reading frame. During trans-translation Ala-aminoacylated tmRNA acts like a tRNA, entering the A-site of stalled ribosomes, displacing the stalled mRNA. The ribosome then switches to translate the ORF on the tmRNA; the nascent peptide is terminated with the 'tag peptide' encoded by the tmRNA and targeted for degradation. The ribosome is freed to recommence translation, which seems to be the essential function of trans-translation. The chain is SsrA-binding protein from Bradyrhizobium sp. (strain ORS 278).